Here is a 252-residue protein sequence, read N- to C-terminus: 3-dehydroquinate dehydratase (252 aa).

Residues S21, 46-48, and R82 contribute to the 3-dehydroquinate site; that span reads EWR. Catalysis depends on H143, which acts as the Proton donor/acceptor. K170 acts as the Schiff-base intermediate with substrate in catalysis. 3-dehydroquinate contacts are provided by R213, S232, and Q236.

The protein belongs to the type-I 3-dehydroquinase family. Homodimer.

The enzyme catalyses 3-dehydroquinate = 3-dehydroshikimate + H2O. It functions in the pathway metabolic intermediate biosynthesis; chorismate biosynthesis; chorismate from D-erythrose 4-phosphate and phosphoenolpyruvate: step 3/7. Involved in the third step of the chorismate pathway, which leads to the biosynthesis of aromatic amino acids. Catalyzes the cis-dehydration of 3-dehydroquinate (DHQ) and introduces the first double bond of the aromatic ring to yield 3-dehydroshikimate. The protein is 3-dehydroquinate dehydratase of Shigella sonnei (strain Ss046).